The primary structure comprises 54 residues: MAVPKKRTSISKKRIRKNIWKRKGYWAALKALSLGKSLSTGNSKSFFVRQTNKS.

It belongs to the bacterial ribosomal protein bL32 family.

The protein localises to the plastid. Its subcellular location is the chloroplast. The chain is Large ribosomal subunit protein bL32c from Lactuca sativa (Garden lettuce).